We begin with the raw amino-acid sequence, 669 residues long: Cytokinesis protein 2 (669 aa).

The F-BAR domain maps to 1–261 (MSYSYEACFW…HLNSFTAADE (261 aa)). Positions 134-200 (KKGCEVLQKK…LKQEYKASQK (67 aa)) form a coiled coil. Phosphoserine is present on residues S337 and S366. Positions 372-518 (VQLQSNVDDS…DYNTRRDTST (147 aa)) are disordered. 2 stretches are compositionally biased toward basic and acidic residues: residues 381-391 (SVLRQKPDKPR) and 397-413 (EQLK…EKGL). At S421 the chain carries Phosphoserine. 2 stretches are compositionally biased toward low complexity: residues 421–431 (SLSSPSESSSS) and 445–455 (MESMTTSVSSM). The SH3 domain maps to 599–667 (PVIEYAKAMY…PYNFIQLLHQ (69 aa)).

Interacts with INN1.

It localises to the cytoplasm. It is found in the cytoskeleton. The protein localises to the bud neck. Its function is as follows. Throughout most of the cell cycle it forms a double ring that coincides with the septins. After the onset of mitosis, forms a ring-like structure which colocalizes with the medial actin ring. Mediates cytoskeletal rearrangements required for cytokinesis. In conjunction with the medial actin ring exhibits contraction-like action. This Saccharomyces cerevisiae (strain ATCC 204508 / S288c) (Baker's yeast) protein is Cytokinesis protein 2 (HOF1).